The following is a 233-amino-acid chain: Cytochrome c oxidase subunit 3 (233 aa).

A run of 4 helical transmembrane segments spans residues 62–82 (VVLF…AYLI), 98–118 (LELL…FVMH), 135–155 (WFGI…YEYF), and 172–192 (VLTG…LSVL).

The protein belongs to the cytochrome c oxidase subunit 3 family.

It localises to the cell membrane. It catalyses the reaction 4 Fe(II)-[cytochrome c] + O2 + 8 H(+)(in) = 4 Fe(III)-[cytochrome c] + 2 H2O + 4 H(+)(out). The chain is Cytochrome c oxidase subunit 3 (ctaE) from Synechocystis sp. (strain ATCC 27184 / PCC 6803 / Kazusa).